The sequence spans 508 residues: Maturase K (508 aa).

Belongs to the intron maturase 2 family. MatK subfamily.

It localises to the plastid. The protein resides in the chloroplast. Functionally, usually encoded in the trnK tRNA gene intron. Probably assists in splicing its own and other chloroplast group II introns. The polypeptide is Maturase K (Cunninghamia lanceolata (China fir)).